Here is a 417-residue protein sequence, read N- to C-terminus: Lysosome-associated membrane glycoprotein 1 (417 aa).

Positions 1–28 are cleaved as a signal peptide; that stretch reads MAAPGSARRPLLLLLLLLLLGLMHCASA. Residues 29-194 are first lumenal domain; sequence AMFMVKNGNG…SRGETRCEQD (166 aa). The Lumenal segment spans residues 29-382; that stretch reads AMFMVKNGNG…EECLLDENSM (354 aa). Residues Asn-37 and Asn-45 are each glycosylated (N-linked (GlcNAc...) asparagine). Cys-41 and Cys-80 form a disulfide bridge. Residue Asn-62 is glycosylated (N-linked (GlcNAc...) (polylactosaminoglycan) asparagine). N-linked (GlcNAc...) asparagine glycans are attached at residues Asn-76, Asn-84, Asn-103, and Asn-107. Asn-121 and Asn-130 each carry an N-linked (GlcNAc...) (polylactosaminoglycan) asparagine glycan. Residues Cys-155 and Cys-191 are joined by a disulfide bond. 2 N-linked (GlcNAc...) asparagine glycosylation sites follow: Asn-165 and Asn-181. Residues 184 to 221 form a disordered region; that stretch reads FSRGETRCEQDRPSPTTAPPAPPSPSPSPVPKSPSVDK. The segment at 195–227 is hinge; that stretch reads RPSPTTAPPAPPSPSPSPVPKSPSVDKYNVSGT. Ser-197 carries O-linked (GalNAc...) serine; partial glycosylation. O-linked (GalNAc...) threonine glycans are attached at residues Thr-199 and Thr-200. The span at 199–215 shows a compositional bias: pro residues; that stretch reads TTAPPAPPSPSPSPVPK. O-linked (GalNAc...) serine glycans are attached at residues Ser-207, Ser-209, and Ser-211. N-linked (GlcNAc...) (polylactosaminoglycan) asparagine glycans are attached at residues Asn-223 and Asn-228. The interval 228–382 is second lumenal domain; the sequence is NGTCLLASMG…EECLLDENSM (155 aa). Cys-231 and Cys-269 are joined by a disulfide. N-linked (GlcNAc...) asparagine glycosylation is found at Asn-241, Asn-249, Asn-261, Asn-293, and Asn-322. Cys-338 and Cys-375 are oxidised to a cystine. Residues 383-410 traverse the membrane as a helical segment; sequence LIPIAVGGALAGLVLIVLIAYLVGRKRS. The Cytoplasmic portion of the chain corresponds to 411-417; that stretch reads HAGYQTI.

Belongs to the LAMP family. Interacts with ABCB9; this interaction strongly stabilizes ABCB9 and protects ABCB9 against lysosomal degradation. Interacts with FURIN. Interacts with TMEM175; inhibiting the proton channel activity of TMEM175. In terms of assembly, (Microbial infection) Interacts with Lassa virus protein glycoprotein. As to quaternary structure, (Microbial infection) Interacts with mumps virus protein F; this interaction promotes protein F cleavage by FURIN. In terms of processing, O- and N-glycosylated; some of the 18 N-linked glycans are polylactosaminoglycans. Post-translationally, (Microbial infection) The glycosylation of Asn-76 is essential for Lassa virus entry into cells.

The protein resides in the lysosome membrane. It localises to the endosome membrane. It is found in the late endosome membrane. The protein localises to the cell membrane. Its subcellular location is the cytolytic granule membrane. In terms of biological role, lysosomal membrane glycoprotein which plays an important role in lysosome biogenesis, lysosomal pH regulation, autophagy and cholesterol homeostasis. Acts as an important regulator of lysosomal lumen pH regulation by acting as a direct inhibitor of the proton channel TMEM175, facilitating lysosomal acidification for optimal hydrolase activity. Also plays an important role in NK-cells cytotoxicity. Mechanistically, participates in cytotoxic granule movement to the cell surface and perforin trafficking to the lytic granule. In addition, protects NK-cells from degranulation-associated damage induced by their own cytotoxic granule content. Presents carbohydrate ligands to selectins. Functionally, (Microbial infection) Acts as a receptor for Lassa virus glycoprotein. Also promotes fusion of the virus with host membrane in less acidic endosomes. (Microbial infection) Supports the FURIN-mediated cleavage of mumps virus fusion protein F by interacting with both FURIN and the unprocessed form but not the processed form of the viral protein F. This Homo sapiens (Human) protein is Lysosome-associated membrane glycoprotein 1.